The sequence spans 203 residues: MSRTARVERVTKETKVLVEIDLDGSGKADIETGVGFYDHMLHQIARHGGFDLTVHTVGDLHIDAHHTMEDTALALGSAVDRALGDRAGIRRYGSATVPMDEVLVRAAVDISGRPYVVHDEPPLAPYIGPVYPTSMTRHVWESFGQSARVTLHVDVLRAARPGGHPDAHHVVEAQFKAVSRALREATAVDPRFTGVVPSTKGTL.

This sequence belongs to the imidazoleglycerol-phosphate dehydratase family.

Its subcellular location is the cytoplasm. It catalyses the reaction D-erythro-1-(imidazol-4-yl)glycerol 3-phosphate = 3-(imidazol-4-yl)-2-oxopropyl phosphate + H2O. The protein operates within amino-acid biosynthesis; L-histidine biosynthesis; L-histidine from 5-phospho-alpha-D-ribose 1-diphosphate: step 6/9. This is Imidazoleglycerol-phosphate dehydratase from Salinispora tropica (strain ATCC BAA-916 / DSM 44818 / JCM 13857 / NBRC 105044 / CNB-440).